The sequence spans 554 residues: (Z)-gamma-bisabolene synthase 1 (554 aa).

Mg(2+) contacts are provided by Asp306, Asp310, Asp450, and Asp458. Positions 306–310 (DDACD) match the DDXXD motif motif.

Belongs to the terpene synthase family. Tpsa subfamily. Mg(2+) is required as a cofactor. It depends on Mn(2+) as a cofactor. As to expression, predominantly expressed in roots. Expressed in the cortex and the sub-epidermal layers of roots. Also detected in leaf hydathodes and flower stigmata.

The protein localises to the cytoplasm. The enzyme catalyses (2E,6E)-farnesyl diphosphate = (Z)-gamma-bisabolene + diphosphate. Its pathway is secondary metabolite biosynthesis; terpenoid biosynthesis. In terms of biological role, involved in sesquiterpene (C15) biosynthesis. The major product is (Z)-gamma-bisabolene with minor amounts of (E)-nerolidol and alpha-bisabolol. The sequence is that of (Z)-gamma-bisabolene synthase 1 (TPS12) from Arabidopsis thaliana (Mouse-ear cress).